The sequence spans 469 residues: Adenosylhomocysteinase (469 aa).

Substrate-binding residues include T63, D139, and E164. 165-167 contributes to the NAD(+) binding site; sequence TTT. Positions 194 and 198 each coordinate substrate. Residues N199, 228–233, E251, N300, 321–323, and N375 each bind NAD(+); these read GYGDVG and IGH.

The protein belongs to the adenosylhomocysteinase family. Requires NAD(+) as cofactor.

The protein localises to the cytoplasm. It catalyses the reaction S-adenosyl-L-homocysteine + H2O = L-homocysteine + adenosine. The protein operates within amino-acid biosynthesis; L-homocysteine biosynthesis; L-homocysteine from S-adenosyl-L-homocysteine: step 1/1. In terms of biological role, may play a key role in the regulation of the intracellular concentration of adenosylhomocysteine. The protein is Adenosylhomocysteinase of Pseudomonas fluorescens (strain Pf0-1).